An 897-amino-acid chain; its full sequence is DNA endonuclease RBBP8 (897 aa).

Residues 22-45 (DLWTKLKECHDREVQGLQVKVTKL) form an essential for binding to the MRN complex and for RPA focus formation on DNA damage region. Residues 35–84 (VQGLQVKVTKLKQERILDAQRLEEFFTKNQQLREQQKVLHETIKVLEDRL) adopt a coiled-coil conformation. Residues 45–160 (LKQERILDAQ…AELECEEDVI (116 aa)) form a required for interaction with LMO4, probably by stabilizing the interaction through RPPB8 dimerization region. Residues lysine 62 and lysine 115 each participate in a glycyl lysine isopeptide (Lys-Gly) (interchain with G-Cter in SUMO2) cross-link. Residues 117–138 (ITELMNERNTLQEENKKLSEQL) adopt a coiled-coil conformation. A Glycyl lysine isopeptide (Lys-Gly) (interchain with G-Cter in SUMO2) cross-link involves residue lysine 193. 2 positions are modified to phosphoserine: serine 233 and serine 276. Positions 292 to 307 (KQPFEESTRNTEDSLR) are enriched in basic and acidic residues. A disordered region spans residues 292-325 (KQPFEESTRNTEDSLRFSDSTSKTPPQEELPTRV). Threonine 315 carries the phosphothreonine; by CDK2 modification. Phosphoserine occurs at positions 326, 327, and 349. Residues lysine 360 and lysine 378 each participate in a glycyl lysine isopeptide (Lys-Gly) (interchain with G-Cter in SUMO2) cross-link. Position 379 is a phosphoserine (serine 379). Residues lysine 396, lysine 404, and lysine 410 each participate in a glycyl lysine isopeptide (Lys-Gly) (interchain with G-Cter in SUMO2) cross-link. The interval 419 to 464 (QNRTEYGKDSNTDKHLEPLKSLGGRTSKRKKTEEESEHEVSCPQAS) is disordered. The span at 420 to 436 (NRTEYGKDSNTDKHLEP) shows a compositional bias: basic and acidic residues. Glycyl lysine isopeptide (Lys-Gly) (interchain with G-Cter in SUMO2) cross-links involve residues lysine 438 and lysine 449. Positions 490 to 494 (PLDLS) match the PXDLS motif motif. The interval 509 to 557 (SETSKNKFRQVTLYEALKTIPKGFSSSRKASDGNCTLPKDSPGEPCSQE) is damage-recruitment motif. Lysine 526 participates in a covalent cross-link: Glycyl lysine isopeptide (Lys-Gly) (interchain with G-Cter in SUMO2); alternate. Residues lysine 530, lysine 572, and lysine 578 each participate in a glycyl lysine isopeptide (Lys-Gly) (interchain with G-Cter in SUMO2) cross-link. Lysine 604 is covalently cross-linked (Glycyl lysine isopeptide (Lys-Gly) (interchain with G-Cter in SUMO2); alternate). Residues lysine 613, lysine 638, and lysine 640 each participate in a glycyl lysine isopeptide (Lys-Gly) (interchain with G-Cter in SUMO2) cross-link. The segment at 641 to 685 (SLQNNQDVSFENIQWSIDPGADLSQYKMDVTVIDTKDGSQSKLGG) is required for interaction with LMO4, probably by making physical contact with LMO4. Serine 664 is modified (phosphoserine; by ATM). Lysine 676 is covalently cross-linked (Glycyl lysine isopeptide (Lys-Gly) (interchain with G-Cter in SUMO2)). The residue at position 679 (serine 679) is a Phosphoserine. The segment at 704–723 (KKQEQKGEKSSNEERKMNDS) is disordered. Residue lysine 719 forms a Glycyl lysine isopeptide (Lys-Gly) (interchain with G-Cter in SUMO2) linkage. Serine 723 carries the post-translational modification Phosphoserine. A Phosphoserine; by ATM modification is found at serine 745. Lysine 782 is covalently cross-linked (Glycyl lysine isopeptide (Lys-Gly) (interchain with G-Cter in SUMO2)). The KLHL15-binding signature appears at 840–842 (FRY). Threonine 847 is modified (phosphothreonine; by CDK1). Threonine 859 carries the phosphothreonine; by ATR modification. Residue lysine 869 forms a Glycyl lysine isopeptide (Lys-Gly) (interchain with G-Cter in SUMO2) linkage. Residues 873–897 (DPCPRPKRRQPYNAIFSPKGKEQKT) form a disordered region.

Belongs to the COM1/SAE2/CtIP family. Homotetramer; formed by antiparallel association of helical extensions protruding from the N-termini of two parallel coiled-coil dimers. Forms a dumbbell-shaped particle in which polar globular domains are held about 30 nm apart by a central rod. Homotetramerization is required for DNA-end resection and repair. Interacts (via the PXDLS motif) with CTBP1; the interaction is disrupted via binding of the adenovirus E1A to CTBP1. Component of the BRCA1-RBBP8 complex. Interacts (the Ser-327 phosphorylated form) with BRCA1 (via the C-terminal BRCT domains): the interaction occurs in the G2 phase, ubiquitinates RBBP8 and involves RBBP8 in BRCA1-dependent G2/M checkpoint control on DNA damage. Interacts with RB1. Interacts with the MRN complex; interacts directly with MRE11; the interaction is required for efficient homologous recombination (HR) and regulation of the MRN complex. Interacts directly with RAD50. Interacts (when phosphorylated by CDK1) with NBN; promoting association with the MRN complex. Interacts with LM04 (via the LIM zinc-binding 1 domain). Interacts with SIAH1. Interacts with RNF138. Interacts with EXD2. Interacts with CUL3 and KLHL15; this interaction leads to RBBP8 proteasomal degradation. Directly interacts with PIN1; this interaction depends upon RBBP8 phosphorylation, predominantly at Thr-315. Interacts with FZR1; this interaction leads to APC/C-mediated RBBP8 proteasomal degradation. Interacts with AUNIP; leading to recruitment of RBBP8 to sites of DNA damage. Interacts with SAMHD1. Interacts with HDGFL2. Hyperphosphorylation upon ionizing radiation results in dissociation from BRCA1. Phosphorylation at Thr-847 by CDK1 is essential for the recruitment to DNA and the DNA repair function. Phosphorylation at Thr-847 and Thr-859 promote interaction with NBN and recruitment to double-strand breaks (DSBs). Phosphorylated on Ser-327 as cells enter G2 phase. This phosphorylation is required for binding BRCA1 and for the G2/M DNA damage transition checkpoint control. Phosphorylation at Thr-315, probably catalyzed by CDK2, is required for PIN1-binding, while phosphorylation at Ser-276 serves as a PIN1 isomerization site. Phosphorylation at Thr-315 is cell-cycle dependent. It steadily increases during S phase, peaks at late S/G2 phase, and drops at G1. Phosphorylation is not required for tetramerization. Binds to DNA more strongly when dephosphorylated. In terms of processing, ubiquitinated. Ubiquitination at multiple sites by BRCA1 (via its N-terminal RING domain) does not lead to its proteasomal degradation but instead the ubiquitinated RBBP8 binds to chromatin following DNA damage and may play a role in G2/M checkpoint control. Ubiquitinated by RNF138 at its N-terminus. Ubiquitinated through 'Lys-48' by the E3 CUL3-KLHL15 complex; this modification leads to proteasomal degradation. Ubiquitinated by the E3 FZR1/APC/C complex; this modification leads to proteasomal degradation. Expressed in ER-positive breast cancer lines, but tends to be down-regulated ER-negative cells (at protein level).

Its subcellular location is the nucleus. The protein resides in the chromosome. In terms of biological role, endonuclease that cooperates with the MRE11-RAD50-NBN (MRN) complex in DNA-end resection, the first step of double-strand break (DSB) repair through the homologous recombination (HR) pathway. HR is restricted to S and G2 phases of the cell cycle and preferentially repairs DSBs resulting from replication fork collapse. Key determinant of DSB repair pathway choice, as it commits cells to HR by preventing classical non-homologous end-joining (NHEJ). Specifically promotes the endonuclease activity of the MRN complex to clear DNA ends containing protein adducts: recruited to DSBs by NBN following phosphorylation by CDK1, and promotes the endonuclease activity of MRE11 to clear protein-DNA adducts and generate clean double-strand break ends. Functions downstream of the MRN complex and ATM, promotes ATR activation and its recruitment to DSBs in the S/G2 phase facilitating the generation of ssDNA. Component of the BRCA1-RBBP8 complex that regulates CHEK1 activation and controls cell cycle G2/M checkpoints on DNA damage. During immunoglobulin heavy chain class-switch recombination, promotes microhomology-mediated alternative end joining (A-NHEJ) and plays an essential role in chromosomal translocations. Binds preferentially to DNA Y-junctions and to DNA substrates with blocked ends and promotes intermolecular DNA bridging. The protein is DNA endonuclease RBBP8 (RBBP8) of Homo sapiens (Human).